The chain runs to 777 residues: Subtilisin-like protease SBT3.7 (777 aa).

A signal peptide spans 1 to 22 (MRNHRTSIFVVLSLVIILNGQS). A propeptide spans 23-113 (GFLPRAGAES…VIPDRFYKPA (91 aa)) (activation peptide). One can recognise an Inhibitor I9 domain in the interval 34-111 (VHIVYLGEKQ…VHVIPDRFYK (78 aa)). Positions 117–624 (TWDYLGLSPT…GGLVNPEKAT (508 aa)) constitute a Peptidase S8 domain. Asn133 is a glycosylation site (N-linked (GlcNAc...) asparagine). Residue Asp147 is the Charge relay system of the active site. 2 N-linked (GlcNAc...) asparagine glycosylation sites follow: Asn180 and Asn206. The active-site Charge relay system is His222. Asn237, Asn397, Asn412, and Asn540 each carry an N-linked (GlcNAc...) asparagine glycan. Residues 386–481 (SLVYPENPGN…ELGTYILFYI (96 aa)) form the PA domain. Ser555 (charge relay system) is an active-site residue. Asn647, Asn723, and Asn758 each carry an N-linked (GlcNAc...) asparagine glycan.

The protein belongs to the peptidase S8 family.

It localises to the secreted. In Arabidopsis thaliana (Mouse-ear cress), this protein is Subtilisin-like protease SBT3.7.